Consider the following 242-residue polypeptide: Uridylate kinase (242 aa).

Residue 17–20 coordinates ATP; sequence KLSG. Gly59 is a binding site for UMP. Gly60 and Arg64 together coordinate ATP. UMP contacts are provided by residues Asp79 and 140–147; that span reads LGNPFFTT. Residues Thr167, Tyr173, and Asp176 each coordinate ATP.

This sequence belongs to the UMP kinase family. In terms of assembly, homohexamer.

It is found in the cytoplasm. It catalyses the reaction UMP + ATP = UDP + ADP. It functions in the pathway pyrimidine metabolism; CTP biosynthesis via de novo pathway; UDP from UMP (UMPK route): step 1/1. With respect to regulation, inhibited by UTP. Catalyzes the reversible phosphorylation of UMP to UDP. This is Uridylate kinase from Buchnera aphidicola subsp. Baizongia pistaciae (strain Bp).